Reading from the N-terminus, the 648-residue chain is MADDTPRQRESISLTPVAHGLENMGAEFLEIMEEGQLPHRHSSLPEGGGSRSKAVWKPFSRWRSLQPTVQARSLCREHWQLFEWISKGLLSTAYIGFLIVACLLDFPRALALFVITCVVLVFLAYNLLKRLLGSKLKKCVKFQGHSCLSLWLKRGLALAAGLGVILWLSLDTAQRPEQLVSFAGICVFLVLLFAGSKHHRAVSWRAVSWGLGLQFVLGLFVIRTEPGFVAFQWLGDQIRVFLSYTEAGSSFVFGEALVKDVFAFQVLPIIVFFSCVMSVLYYLGLMQWVILKIAWLMQVTMGTSATETLSVAGNIFVSQTEAPLLIRPYLADMTLSEVHVVMTGGYATIAGSLLGAYISFGIDASSLIAASVMAAPCALALSKLVYPEVEESKFRSEEGVKLTYGDAQNLVEAASAGAAISVKVVANIAANLIAFLAVLAFINAALSWLGDMVDIQGLSFQLICSYVLRPVAFLMGVAWEDCPVVAELLGIKLFLNEFVAYQELSQYKQRRLAGAEEWLGDKKQWISVRAEILTTYALCGFANFSSIGIMLGGLTSMVPQRRSDFSQIVLRALITGAFVSLVNACVAGILYVPRGVEVDCMSLLNQTVSSSSFEVYLCCRQVFQNTSLEFGQEALHNCCRFYNHTVCT.

Residues 1–83 are Cytoplasmic-facing; that stretch reads MADDTPRQRE…LCREHWQLFE (83 aa). A helical transmembrane segment spans residues 84–104; it reads WISKGLLSTAYIGFLIVACLL. Topologically, residues 105–108 are extracellular; that stretch reads DFPR. A helical membrane pass occupies residues 109–129; the sequence is ALALFVITCVVLVFLAYNLLK. Residues 130–147 are Cytoplasmic-facing; sequence RLLGSKLKKCVKFQGHSC. Residues 148–168 traverse the membrane as a helical segment; that stretch reads LSLWLKRGLALAAGLGVILWL. Topologically, residues 169–175 are extracellular; the sequence is SLDTAQR. A helical membrane pass occupies residues 176–196; the sequence is PEQLVSFAGICVFLVLLFAGS. Over 197 to 201 the chain is Cytoplasmic; sequence KHHRA. Residues 202 to 222 traverse the membrane as a helical segment; the sequence is VSWRAVSWGLGLQFVLGLFVI. Topologically, residues 223 to 265 are extracellular; the sequence is RTEPGFVAFQWLGDQIRVFLSYTEAGSSFVFGEALVKDVFAFQ. The helical transmembrane segment at 266–286 threads the bilayer; that stretch reads VLPIIVFFSCVMSVLYYLGLM. The Cytoplasmic portion of the chain corresponds to 287–294; the sequence is QWVILKIA. A helical membrane pass occupies residues 295-318; the sequence is WLMQVTMGTSATETLSVAGNIFVS. The Extracellular portion of the chain corresponds to 319-339; that stretch reads QTEAPLLIRPYLADMTLSEVH. A helical transmembrane segment spans residues 340 to 360; it reads VVMTGGYATIAGSLLGAYISF. Residue G361 is a topological domain, cytoplasmic. A helical transmembrane segment spans residues 362 to 380; it reads IDASSLIAASVMAAPCALA. Topologically, residues 381-427 are extracellular; that stretch reads LSKLVYPEVEESKFRSEEGVKLTYGDAQNLVEAASAGAAISVKVVAN. A helical transmembrane segment spans residues 428–448; that stretch reads IAANLIAFLAVLAFINAALSW. Over 449–470 the chain is Cytoplasmic; that stretch reads LGDMVDIQGLSFQLICSYVLRP. The chain crosses the membrane as a helical span at residues 471-491; that stretch reads VAFLMGVAWEDCPVVAELLGI. Residues 492-531 are Extracellular-facing; sequence KLFLNEFVAYQELSQYKQRRLAGAEEWLGDKKQWISVRAE. Residues 532 to 552 form a helical membrane-spanning segment; the sequence is ILTTYALCGFANFSSIGIMLG. Topologically, residues 553-571 are cytoplasmic; sequence GLTSMVPQRRSDFSQIVLR. A helical membrane pass occupies residues 572–592; sequence ALITGAFVSLVNACVAGILYV. Over 593 to 648 the chain is Extracellular; that stretch reads PRGVEVDCMSLLNQTVSSSSFEVYLCCRQVFQNTSLEFGQEALHNCCRFYNHTVCT. N-linked (GlcNAc...) asparagine glycosylation is found at N605, N625, and N643.

The protein belongs to the concentrative nucleoside transporter (CNT) (TC 2.A.41) family. Post-translationally, N-glycosylated. N-glycosylation is required for localization to the plasma membrane and the transporter activity.

Its subcellular location is the cell membrane. The protein localises to the apical cell membrane. It catalyses the reaction uridine(out) + Na(+)(out) = uridine(in) + Na(+)(in). The catalysed reaction is thymidine(out) + Na(+)(out) = thymidine(in) + Na(+)(in). The enzyme catalyses cytidine(out) + Na(+)(out) = cytidine(in) + Na(+)(in). It carries out the reaction adenosine(out) + Na(+)(out) = adenosine(in) + Na(+)(in). With respect to regulation, due to its high apparent affinity but slow transport, adenosine could act as a negative regulator of pyrimidine transport under some conditions. Sodium and pyrimidine nucleoside symporter of the plasma membrane that imports uridine, thymidine and cytidine into cells by coupling their transport to the transmembrane sodium electrochemical gradient. Also transports adenosine, an atypical substrate transported with high apparent affinity, but low maximum velocity. Therefore, exhibits the transport characteristics of the nucleoside transport system cit or N2 subtype (N2/cit). Involved in renal nucleoside (re)absorption. This Mus musculus (Mouse) protein is Sodium/nucleoside cotransporter 1.